The following is a 162-amino-acid chain: Regulator of sigma D (162 aa).

Belongs to the Rsd/AlgQ family. As to quaternary structure, interacts with RpoD.

Its subcellular location is the cytoplasm. Binds RpoD and negatively regulates RpoD-mediated transcription activation by preventing the interaction between the primary sigma factor RpoD with the catalytic core of the RNA polymerase and with promoter DNA. May be involved in replacement of the RNA polymerase sigma subunit from RpoD to RpoS during the transition from exponential growth to the stationary phase. This chain is Regulator of sigma D, found in Salmonella arizonae (strain ATCC BAA-731 / CDC346-86 / RSK2980).